Consider the following 108-residue polypeptide: Vitelline membrane protein 15a-1 (108 aa).

Residues 1 to 18 (MNKFIILAIFALAVGAMA) form the signal peptide. Residues 52 to 88 (HAPHAKCGANLLVGCAPSVAHVPCVPLPGHAPAHGYG) form the VM domain. The segment at 87-108 (YGHAPAPHYRAPESDSFDQFEE) is disordered.

Belongs to the vitelline membrane family. In terms of tissue distribution, expressed in the middle and posterior regions of the follicle cells.

Its subcellular location is the secreted. This chain is Vitelline membrane protein 15a-1, found in Aedes aegypti (Yellowfever mosquito).